Consider the following 422-residue polypeptide: ATP-dependent RNA helicase RhlB (422 aa).

The short motif at 9 to 37 (QKFSDFALHPLVIKAIENQGFYHCTPIQA) is the Q motif element. One can recognise a Helicase ATP-binding domain in the interval 40–219 (FPITLAGRDV…FEQMNHPEYI (180 aa)). 53–60 (AQTGTGKT) provides a ligand contact to ATP. Residues 165 to 168 (DEAD) carry the DEAD box motif. Residues 245–390 (RLLQTLIEEE…TSEYNKEALL (146 aa)) enclose the Helicase C-terminal domain. The interval 394-422 (PQPKRLQRHHRHYAGSRNQGASRKPRSPQ) is disordered. Positions 398–407 (RLQRHHRHYA) are enriched in basic residues.

Belongs to the DEAD box helicase family. RhlB subfamily. Component of the RNA degradosome, which is a multiprotein complex involved in RNA processing and mRNA degradation.

Its subcellular location is the cytoplasm. The enzyme catalyses ATP + H2O = ADP + phosphate + H(+). In terms of biological role, DEAD-box RNA helicase involved in RNA degradation. Has RNA-dependent ATPase activity and unwinds double-stranded RNA. The protein is ATP-dependent RNA helicase RhlB of Hamiltonella defensa subsp. Acyrthosiphon pisum (strain 5AT).